A 310-amino-acid polypeptide reads, in one-letter code: Homoserine kinase (310 aa).

Position 91 to 101 (proline 91 to cysteine 101) interacts with ATP.

It belongs to the GHMP kinase family. Homoserine kinase subfamily.

The protein localises to the cytoplasm. The catalysed reaction is L-homoserine + ATP = O-phospho-L-homoserine + ADP + H(+). The protein operates within amino-acid biosynthesis; L-threonine biosynthesis; L-threonine from L-aspartate: step 4/5. Functionally, catalyzes the ATP-dependent phosphorylation of L-homoserine to L-homoserine phosphate. In Escherichia coli O17:K52:H18 (strain UMN026 / ExPEC), this protein is Homoserine kinase.